A 416-amino-acid polypeptide reads, in one-letter code: MTRKYIYIYIYIILKVRARVGANNKTLINNQSHLIEMRNTLMLSDLPGDLLEEILCRVPATSLKQLRSTCKQWNNLFNNGRFTRKHLDKAPKDFQNLMLSDSRVFSMSVSFHGIPSVEATCELSLIDSFSSFEDKFEISQVFHCDGLLLCTDADNTRIVVWNPCTGKTRWIEPNNRCYYYAFGSYLDKSYGNSYKILSYSGYGYENQELAIYEINSQSWRFLDVTRDCILERYTDYGVSLKGHTYWFASDEKEKNLSVFLVSFDYTTERFRRLRLPYQCPDYNTASLSVVREEKLAVLLQRENTSRTEIWVTSRIGETKVVSWSMVLAVDFPSELFILSGISFLVDAEKKFVVCCDNYFGEDEYDTKNLVHIVGENNKVREVNFGVSESSWPFLFNYVPSLIQIWEGVGGKRKRVE.

Residues 40-86 (TLMLSDLPGDLLEEILCRVPATSLKQLRSTCKQWNNLFNNGRFTRKH) form the F-box domain.

This Arabidopsis thaliana (Mouse-ear cress) protein is Probable F-box protein At5g47300.